The following is a 463-amino-acid chain: tRNA-2-methylthio-N(6)-dimethylallyladenosine synthase (463 aa).

In terms of domain architecture, MTTase N-terminal spans 5–125; it reads RKLHIKSYGC…LPQLLAKAEQ (121 aa). The [4Fe-4S] cluster site is built by C14, C50, C88, C166, C170, and C173. Residues 152 to 384 enclose the Radical SAM core domain; that stretch reads RARGISAFVT…QQLIDQQQSA (233 aa). Residues 387-449 enclose the TRAM domain; sequence KAAIGRTVEV…RYSLLGELAS (63 aa).

This sequence belongs to the methylthiotransferase family. MiaB subfamily. As to quaternary structure, monomer. It depends on [4Fe-4S] cluster as a cofactor.

Its subcellular location is the cytoplasm. It catalyses the reaction N(6)-dimethylallyladenosine(37) in tRNA + (sulfur carrier)-SH + AH2 + 2 S-adenosyl-L-methionine = 2-methylsulfanyl-N(6)-dimethylallyladenosine(37) in tRNA + (sulfur carrier)-H + 5'-deoxyadenosine + L-methionine + A + S-adenosyl-L-homocysteine + 2 H(+). Catalyzes the methylthiolation of N6-(dimethylallyl)adenosine (i(6)A), leading to the formation of 2-methylthio-N6-(dimethylallyl)adenosine (ms(2)i(6)A) at position 37 in tRNAs that read codons beginning with uridine. This is tRNA-2-methylthio-N(6)-dimethylallyladenosine synthase from Rhodopseudomonas palustris (strain ATCC BAA-98 / CGA009).